Reading from the N-terminus, the 146-residue chain is 3-dehydroquinate dehydratase (146 aa).

The Proton acceptor role is filled by Tyr22. Residues Asn73, His79, and Asp86 each contribute to the substrate site. The active-site Proton donor is the His99. Substrate is bound by residues 100-101 and Arg110; that span reads IS.

The protein belongs to the type-II 3-dehydroquinase family. In terms of assembly, homododecamer.

It carries out the reaction 3-dehydroquinate = 3-dehydroshikimate + H2O. It participates in metabolic intermediate biosynthesis; chorismate biosynthesis; chorismate from D-erythrose 4-phosphate and phosphoenolpyruvate: step 3/7. In terms of biological role, catalyzes a trans-dehydration via an enolate intermediate. The protein is 3-dehydroquinate dehydratase of Prochlorococcus marinus subsp. pastoris (strain CCMP1986 / NIES-2087 / MED4).